Consider the following 289-residue polypeptide: ATP synthase subunit a (289 aa).

Helical transmembrane passes span 41–61 (KATALTIFAALFVGVIFWLGF), 101–121 (YLLVLFSFVLVSNVLAIIPAA), 129–149 (IAVPMVLAVVTWVMFIYAGIK), 166–186 (TAPLAIRLLLGPIEILSTLIV), 189–209 (FTLAIRLFANMFAGHLLLLVF), 222–242 (FVFGVASLLVAIVLTAFELVI), and 244–264 (ALQAYIITILTAAYIGGAMAH).

The protein belongs to the ATPase A chain family. As to quaternary structure, F-type ATPases have 2 components, CF(1) - the catalytic core - and CF(0) - the membrane proton channel. CF(1) has five subunits: alpha(3), beta(3), gamma(1), delta(1), epsilon(1). CF(0) has three main subunits: a(1), b(2) and c(9-12). The alpha and beta chains form an alternating ring which encloses part of the gamma chain. CF(1) is attached to CF(0) by a central stalk formed by the gamma and epsilon chains, while a peripheral stalk is formed by the delta and b chains.

It localises to the cell membrane. Its function is as follows. Key component of the proton channel; it plays a direct role in the translocation of protons across the membrane. This is ATP synthase subunit a from Frankia alni (strain DSM 45986 / CECT 9034 / ACN14a).